Reading from the N-terminus, the 734-residue chain is Photosystem I P700 chlorophyll a apoprotein A2 (734 aa).

Transmembrane regions (helical) follow at residues 46-69 (IFAS…FHVA), 135-158 (LYTG…LHLQ), 175-199 (LNHH…HVAI), 273-291 (MAHH…GHMY), 330-353 (IHFQ…QHMY), 369-395 (AALY…IFFI), 417-439 (AIIS…LYVH), and 517-535 (FLVH…LILV). The [4Fe-4S] cluster site is built by cysteine 559 and cysteine 568. Helical transmembrane passes span 575 to 596 (AFYL…YWHW) and 643 to 665 (LSVW…MFLI). Chlorophyll a contacts are provided by histidine 654, methionine 662, and tyrosine 670. Tryptophan 671 contributes to the phylloquinone binding site. A helical membrane pass occupies residues 707–727 (LVGLAHFSVGYIFTYAAFLIA).

The protein belongs to the PsaA/PsaB family. In terms of assembly, the PsaA/B heterodimer binds the P700 chlorophyll special pair and subsequent electron acceptors. PSI consists of a core antenna complex that captures photons, and an electron transfer chain that converts photonic excitation into a charge separation. The eukaryotic PSI reaction center is composed of at least 11 subunits. P700 is a chlorophyll a/chlorophyll a' dimer, A0 is one or more chlorophyll a, A1 is one or both phylloquinones and FX is a shared 4Fe-4S iron-sulfur center. is required as a cofactor.

It is found in the plastid. Its subcellular location is the chloroplast thylakoid membrane. It catalyses the reaction reduced [plastocyanin] + hnu + oxidized [2Fe-2S]-[ferredoxin] = oxidized [plastocyanin] + reduced [2Fe-2S]-[ferredoxin]. In terms of biological role, psaA and PsaB bind P700, the primary electron donor of photosystem I (PSI), as well as the electron acceptors A0, A1 and FX. PSI is a plastocyanin-ferredoxin oxidoreductase, converting photonic excitation into a charge separation, which transfers an electron from the donor P700 chlorophyll pair to the spectroscopically characterized acceptors A0, A1, FX, FA and FB in turn. Oxidized P700 is reduced on the lumenal side of the thylakoid membrane by plastocyanin. This chain is Photosystem I P700 chlorophyll a apoprotein A2, found in Arabis hirsuta (Hairy rock-cress).